The sequence spans 371 residues: MSIHSASPIIRRKSRKIWVGNVPVGGDAPIAVQSMTNTETCDVAATVAQIRRLEDAGADIVRVSVPDMDAAEAFGKIKQQVNVPLVADIHFDYRIALRVAELGVDCLRINPGNIGREDRVKAVVDAARERNIPIRIGVNAGSLEKDLQKKYGEPTPEALLESAMRHVDHLDKLDFQNFKVSVKASDVFMAVAAYRLLARQIEQPLHLGITEAGGLRSGTVKSAVGLGMLLAEGIGDTIRISLAADPVEEIKVGFDILKSLHLRSRGINFIACPSCSRQNFDVVKTMNELEGRLEDLLVPMDVAVIGCVVNGPGEAKEAHVGLTGGTPNLVYIDGKPSQKLTNDNLVDELERLIRQKAAEKAEADASLIARG.

[4Fe-4S] cluster contacts are provided by Cys272, Cys275, Cys307, and Glu314.

This sequence belongs to the IspG family. [4Fe-4S] cluster is required as a cofactor.

It catalyses the reaction (2E)-4-hydroxy-3-methylbut-2-enyl diphosphate + oxidized [flavodoxin] + H2O + 2 H(+) = 2-C-methyl-D-erythritol 2,4-cyclic diphosphate + reduced [flavodoxin]. Its pathway is isoprenoid biosynthesis; isopentenyl diphosphate biosynthesis via DXP pathway; isopentenyl diphosphate from 1-deoxy-D-xylulose 5-phosphate: step 5/6. In terms of biological role, converts 2C-methyl-D-erythritol 2,4-cyclodiphosphate (ME-2,4cPP) into 1-hydroxy-2-methyl-2-(E)-butenyl 4-diphosphate. The protein is 4-hydroxy-3-methylbut-2-en-1-yl diphosphate synthase (flavodoxin) of Pseudomonas aeruginosa (strain LESB58).